The primary structure comprises 320 residues: MAYQEDLHPLLGKAVEHINRVMVGKRDIAILSLAALLAKGHVLLEDVPGVGKTMMVRALAKSIGADFKRIQFTPDLLPSDVTGVSIYNAKTMEFEYRPGPIMGNIVLADEINRTSPKTQSALLEAMEEGSVTVDGHTMQLADPFFVMATQNPVEYEGTYPLPEAQLDRFLFKLRMGYPSFNEELDVLSLQEKSHPIETLEPVIAKEDFIFLQREVQNVRADDSIKEYIVEIVQKTRQHPSVQLGVSPRGSIALMKAAQAYALLHHRDYVIPDDIQYLAPFTLPHRMMLHPEAKFEGIQAEAIVREIMSAVKVPVQRSAVR.

46–53 (DVPGVGKT) is an ATP binding site.

It belongs to the MoxR family.

This is an uncharacterized protein from Bacillus subtilis (strain 168).